A 124-amino-acid chain; its full sequence is Large ribosomal subunit protein uL18 (124 aa).

It belongs to the universal ribosomal protein uL18 family. In terms of assembly, part of the 50S ribosomal subunit; part of the 5S rRNA/L5/L18/L25 subcomplex. Contacts the 5S and 23S rRNAs.

Its function is as follows. This is one of the proteins that bind and probably mediate the attachment of the 5S RNA into the large ribosomal subunit, where it forms part of the central protuberance. The protein is Large ribosomal subunit protein uL18 of Aquifex pyrophilus.